Here is a 555-residue protein sequence, read N- to C-terminus: Formate--tetrahydrofolate ligase (555 aa).

64–71 (TKAGIGKT) is a binding site for ATP.

Belongs to the formate--tetrahydrofolate ligase family.

It catalyses the reaction (6S)-5,6,7,8-tetrahydrofolate + formate + ATP = (6R)-10-formyltetrahydrofolate + ADP + phosphate. The protein operates within one-carbon metabolism; tetrahydrofolate interconversion. This is Formate--tetrahydrofolate ligase from Bacteroides thetaiotaomicron (strain ATCC 29148 / DSM 2079 / JCM 5827 / CCUG 10774 / NCTC 10582 / VPI-5482 / E50).